The chain runs to 608 residues: Sensor protein kinase WalK (608 aa).

Helical transmembrane passes span 14-34 (LVIV…LYFT) and 183-203 (IFIV…FFIA). The HAMP domain occupies 204-256 (RTITKPITDMRNQTVEMSRGNYTQRVKIYGNDEIGELALAFNNLSKRVQEAQA). Residues 261–331 (EKRRLDSVIT…EIQENNDSFL (71 aa)) form the PAS domain. His-271, Asp-274, His-364, and Glu-368 together coordinate Zn(2+). A PAC domain is found at 314–378 (LEDEFKLEEI…QQQVERERRE (65 aa)). The Histidine kinase domain occupies 382–600 (NVSHELRTPL…SIFITLPCEV (219 aa)). His-385 carries the phosphohistidine; by autocatalysis modification.

As to quaternary structure, forms homodimers. Forms homooligomers. Autophosphorylated.

It localises to the cell membrane. The catalysed reaction is ATP + protein L-histidine = ADP + protein N-phospho-L-histidine.. By zinc. Zinc-binding negatively regulates WalK kinase activity and thus autophosphorylation. Its function is as follows. Member of the two-component regulatory system WalK/WalR that regulates genes involved in cell wall metabolism, virulence regulation, biofilm production, oxidative stress resistance and antibiotic resistance via direct or indirect regulation of autolysins. Functions as a sensor protein kinase which is autophosphorylated at a histidine residue in the dimerization domain and transfers its phosphate group to the conserved aspartic acid residue in the regulatory domain of WalR. In turn, WalR binds to the upstream promoter regions of the target genes to positively and negatively regulate their expression. The chain is Sensor protein kinase WalK (walK) from Staphylococcus aureus (strain MRSA252).